The sequence spans 235 residues: ATP-dependent Clp protease proteolytic subunit (235 aa).

The Nucleophile role is filled by S123. H148 is an active-site residue.

The protein belongs to the peptidase S14 family. In terms of assembly, fourteen ClpP subunits assemble into 2 heptameric rings which stack back to back to give a disk-like structure with a central cavity, resembling the structure of eukaryotic proteasomes.

Its subcellular location is the cytoplasm. The catalysed reaction is Hydrolysis of proteins to small peptides in the presence of ATP and magnesium. alpha-casein is the usual test substrate. In the absence of ATP, only oligopeptides shorter than five residues are hydrolyzed (such as succinyl-Leu-Tyr-|-NHMec, and Leu-Tyr-Leu-|-Tyr-Trp, in which cleavage of the -Tyr-|-Leu- and -Tyr-|-Trp bonds also occurs).. Functionally, cleaves peptides in various proteins in a process that requires ATP hydrolysis. Has a chymotrypsin-like activity. Plays a major role in the degradation of misfolded proteins. This is ATP-dependent Clp protease proteolytic subunit from Novosphingobium aromaticivorans (strain ATCC 700278 / DSM 12444 / CCUG 56034 / CIP 105152 / NBRC 16084 / F199).